Consider the following 190-residue polypeptide: Small ribosomal subunit protein uS5 (190 aa).

One can recognise an S5 DRBM domain in the interval 19-82 (IIDKLVTINR…ERAKRSMIRV (64 aa)). Residues 161-190 (SVASRRGKKVSDILGRREPVAGQEGEEAHA) are disordered. Over residues 169–179 (KVSDILGRREP) the composition is skewed to basic and acidic residues.

This sequence belongs to the universal ribosomal protein uS5 family. In terms of assembly, part of the 30S ribosomal subunit. Contacts proteins S4 and S8.

With S4 and S12 plays an important role in translational accuracy. Its function is as follows. Located at the back of the 30S subunit body where it stabilizes the conformation of the head with respect to the body. The chain is Small ribosomal subunit protein uS5 from Granulibacter bethesdensis (strain ATCC BAA-1260 / CGDNIH1).